Here is a 171-residue protein sequence, read N- to C-terminus: Sec-independent protein translocase protein TatB (171 aa).

The chain crosses the membrane as a helical span at residues 1–21 (MFDIGFSELLLVFIIGLVVLG). The segment at 89–171 (AESMKRSYVA…APSPSSSDKP (83 aa)) is disordered. Residues 100 to 123 (DPEKASDEAHTIHNPVVKDNETAH) are compositionally biased toward basic and acidic residues. Polar residues predominate over residues 130 to 139 (AAQTQASSPE).

This sequence belongs to the TatB family. The Tat system comprises two distinct complexes: a TatABC complex, containing multiple copies of TatA, TatB and TatC subunits, and a separate TatA complex, containing only TatA subunits. Substrates initially bind to the TatABC complex, which probably triggers association of the separate TatA complex to form the active translocon.

The protein resides in the cell inner membrane. In terms of biological role, part of the twin-arginine translocation (Tat) system that transports large folded proteins containing a characteristic twin-arginine motif in their signal peptide across membranes. Together with TatC, TatB is part of a receptor directly interacting with Tat signal peptides. TatB may form an oligomeric binding site that transiently accommodates folded Tat precursor proteins before their translocation. This Escherichia coli O1:K1 / APEC protein is Sec-independent protein translocase protein TatB.